A 1601-amino-acid polypeptide reads, in one-letter code: Polycomb group protein Psc (1601 aa).

2 disordered regions span residues 1–91 (MMTP…TTTT) and 165–245 (NGIK…DLAT). 2 stretches are compositionally biased toward low complexity: residues 8–91 (AIQP…TTTT) and 182–198 (SSSSSSSSSSSSSSSSS). The span at 199–215 (WPTTRRATSEDASSNGG) shows a compositional bias: polar residues. Positions 228–245 (TAAVAASSTATTTSDLAT) are enriched in low complexity. The RING-type zinc finger occupies 263-302 (CHLCQGYLINATTIVECLHSFCHSCLINHLRKERFCPRCE). Disordered regions lie at residues 561–693 (KREK…FSED), 711–856 (VESP…NRTP), 895–960 (IGGG…SNNY), 1011–1097 (YKYT…EKQQ), 1116–1315 (SITI…LAPK), 1330–1408 (NPAA…HPVM), and 1512–1601 (AATG…TKSK). Residues 567–590 (SPQMSSKSSSKSSPCTPVSSPSEP) show a composition bias toward low complexity. Over residues 611 to 637 (DPERREIVKPLKPEKESRSKKKDKDGS) the composition is skewed to basic and acidic residues. A compositionally biased stretch (low complexity) spans 638 to 649 (PKSSSSSSSSSS). A phosphoserine mark is found at S656 and S658. Residues 676–689 (SGVSTLSPRVTSGA) are compositionally biased toward polar residues. Positions 729 to 739 (SVQQSASPKSK) are enriched in low complexity. Positions 812–822 (LMPPPAKPPML) are enriched in pro residues. Over residues 929–938 (TTPSQGNKNV) the composition is skewed to polar residues. The span at 1011-1022 (YKYTPKPTPNSG) shows a compositional bias: low complexity. Over residues 1036-1045 (LGGGNGGSLG) the composition is skewed to gly residues. Over residues 1069-1085 (SSATQSGGNNGIVNNNI) the composition is skewed to low complexity. Over residues 1116–1133 (SITISRDNGDSSSPNNGQ) the composition is skewed to polar residues. S1139 bears the Phosphoserine mark. A compositionally biased stretch (pro residues) spans 1204–1217 (PQLPKVATPPPPSS). Phosphothreonine is present on residues T1222, T1236, and T1251. Positions 1247-1258 (VDKKTPSPEKRT) are enriched in basic and acidic residues. Residues S1253, S1266, and S1274 each carry the phosphoserine modification. The segment covering 1261–1272 (QMGSHSPTASEN) has biased composition (polar residues). Composition is skewed to polar residues over residues 1352 to 1375 (QSGQQKLVNGGQSQPAQQKTSPPA) and 1561 to 1587 (APQTKGNSSSGAANARQQTAATGNNGA).

In terms of assembly, component of PRC1 complex, which contains many PcG proteins like Pc, ph, Scm, Psc, Sce and also chromatin-remodeling proteins such as histone deacetylases. This complex is distinct from the Esc/E(z) complex, at least composed of esc, E(z), Su(z)12, HDAC1/Rpd3 and Caf1-55. The 2 complexes however cooperate and interact together during the first 3 hours of development to establish PcG silencing.

It is found in the nucleus. Its function is as follows. Polycomb group (PcG) protein. PcG proteins act by forming multiprotein complexes, which are required to maintain the transcriptionally repressive state of homeotic genes throughout development. PcG proteins are not required to initiate repression, but to maintain it during later stages of development. Component of the PcG multiprotein PRC1 complex, a complex that acts via chromatin remodeling and modification of histones; it mediates monoubiquitination of histone H2A 'Lys-118', rendering chromatin heritably changed in its expressibility. Needed to maintain expression patterns of the homeotic selector genes of the Antennapedia (Antp-C) and Bithorax (BX-C) complexes, and hence for the maintenance of segmental determination. This chain is Polycomb group protein Psc (Psc), found in Drosophila melanogaster (Fruit fly).